Reading from the N-terminus, the 706-residue chain is MLNPIVRKFQYGQHTVTLETGMMARQATAAVMVSMDDTAVFVTVVGAKNAKPGQSFFPLTVNYQERTYAAGRFPGGFFRREGRPSEGETLTSRLIDRPIRPLFPEGFLNEVQVIATVVSVNPQVSPDIVAMIGASAALSLSGIPFSGPIGVARVGYLNDQYVLNPTTDELKESRLDLVVAGTQGAVLMVESEAELLSEDQMLGAVVFGHEQQQIVIENINSLVAEAGKPKWEWHAPAVNVSLEQRVQALSEARLGDAYRITEKQERYAQVNVIKTDVVAALQAEDETLNAGEIQEILGNIEKNVVRGRVLAGEPRIDGREKDMIRGLDVRTGVLPRTHGSALFTRGETQALVTATLGTERDAQNIDELTGERTDRFLLHYNFPPYCVGETGMVGSPKRREIGHGRLAKRGVLAVMPKANEFPYTVRVVSEITESNGSSSMASVCGASLALMDAGVPIKSAVAGIAMGLVKEGDNFVVLSDILGDEDHLGDMDFKVAGSREGITALQMDIKIEGITREIMQVALNQAKGARLHILGVMEQAISTPRGDISEFAPRIHTIKISTDKIKDVIGKGGSVIRALTEETGTTIEIEDDGTVRIASTDGEKAKHAIRRIEEITAEIEVGRVYQGKVTRIVDFGAFVAIGGGKEGLVHISQIADKRVEKVTDYLQMGQEVPVKVLEVDRQGRVRLSIKEANPQTQEAAAPSSEE.

Residues Asp486 and Asp492 each coordinate Mg(2+). The 60-residue stretch at 553-612 folds into the KH domain; sequence PRIHTIKISTDKIKDVIGKGGSVIRALTEETGTTIEIEDDGTVRIASTDGEKAKHAIRRI. Residues 622-690 form the S1 motif domain; sequence GRVYQGKVTR…RQGRVRLSIK (69 aa).

The protein belongs to the polyribonucleotide nucleotidyltransferase family. Component of the RNA degradosome, which is a multiprotein complex involved in RNA processing and mRNA degradation. Mg(2+) is required as a cofactor.

The protein localises to the cytoplasm. It carries out the reaction RNA(n+1) + phosphate = RNA(n) + a ribonucleoside 5'-diphosphate. In terms of biological role, involved in mRNA degradation. Catalyzes the phosphorolysis of single-stranded polyribonucleotides processively in the 3'- to 5'-direction. The chain is Polyribonucleotide nucleotidyltransferase from Pectobacterium atrosepticum (strain SCRI 1043 / ATCC BAA-672) (Erwinia carotovora subsp. atroseptica).